Here is a 323-residue protein sequence, read N- to C-terminus: tRNA U34 carboxymethyltransferase (323 aa).

Carboxy-S-adenosyl-L-methionine contacts are provided by residues Lys-91, Trp-105, Lys-110, Gly-130, 152 to 154 (DPT), 181 to 182 (IE), Met-196, Tyr-200, and Arg-315.

This sequence belongs to the class I-like SAM-binding methyltransferase superfamily. CmoB family. Homotetramer.

The enzyme catalyses carboxy-S-adenosyl-L-methionine + 5-hydroxyuridine(34) in tRNA = 5-carboxymethoxyuridine(34) in tRNA + S-adenosyl-L-homocysteine + H(+). Its function is as follows. Catalyzes carboxymethyl transfer from carboxy-S-adenosyl-L-methionine (Cx-SAM) to 5-hydroxyuridine (ho5U) to form 5-carboxymethoxyuridine (cmo5U) at position 34 in tRNAs. This Escherichia coli (strain K12 / MC4100 / BW2952) protein is tRNA U34 carboxymethyltransferase.